The sequence spans 762 residues: 5-methyltetrahydropteroyltriglutamate--homocysteine methyltransferase (762 aa).

5-methyltetrahydropteroyltri-L-glutamate is bound by residues 17–20 and Lys-111; that span reads REWK. L-homocysteine-binding positions include 435-437 and Glu-488; that span reads IGS. L-methionine contacts are provided by residues 435–437 and Glu-488; that span reads IGS. 5-methyltetrahydropteroyltri-L-glutamate is bound by residues 519–520 and Trp-565; that span reads RC. Residue Asp-603 coordinates L-homocysteine. An L-methionine-binding site is contributed by Asp-603. Glu-609 serves as a coordination point for 5-methyltetrahydropteroyltri-L-glutamate. His-645, Cys-647, and Glu-669 together coordinate Zn(2+). His-698 (proton donor) is an active-site residue. Cys-730 is a Zn(2+) binding site.

This sequence belongs to the vitamin-B12 independent methionine synthase family. It depends on Zn(2+) as a cofactor.

It carries out the reaction 5-methyltetrahydropteroyltri-L-glutamate + L-homocysteine = tetrahydropteroyltri-L-glutamate + L-methionine. It participates in amino-acid biosynthesis; L-methionine biosynthesis via de novo pathway; L-methionine from L-homocysteine (MetE route): step 1/1. Functionally, catalyzes the transfer of a methyl group from 5-methyltetrahydrofolate to homocysteine resulting in methionine formation. The protein is 5-methyltetrahydropteroyltriglutamate--homocysteine methyltransferase of Bacillus thuringiensis (strain Al Hakam).